A 933-amino-acid chain; its full sequence is Phospholipase D2 (933 aa).

Disordered regions lie at residues 1–20 and 134–160; these read MAAT…SSQL and SPAP…RRTA. Residues 65–195 enclose the PX domain; that stretch reads VIAQVVGTER…TEFLEVSQLS (131 aa). The 109-residue stretch at 203–311 folds into the PH domain; it reads KGLEGVIRKR…WAQEITELAQ (109 aa). 2 PLD phosphodiesterase domains span residues 437-464 and 751-778; these read TLWA…AYGR and ELIY…NDRS. The segment at 441–788 is catalytic; it reads HHEKLLVVDQ…LLGKRDSELA (348 aa).

It belongs to the phospholipase D family. As to quaternary structure, interacts with PIP5K1B. Interacts with EGFR. In terms of processing, phosphorylated by FGR.

It localises to the cell membrane. It carries out the reaction a 1,2-diacyl-sn-glycero-3-phosphocholine + H2O = a 1,2-diacyl-sn-glycero-3-phosphate + choline + H(+). The enzyme catalyses 1,2-dihexadecanoyl-sn-glycero-3-phosphocholine + H2O = 1,2-dihexadecanoyl-sn-glycero-3-phosphate + choline + H(+). In terms of biological role, function as phospholipase selective for phosphatidylcholine. May have a role in signal-induced cytoskeletal regulation and/or endocytosis. The sequence is that of Phospholipase D2 (PLD2) from Bos taurus (Bovine).